A 157-amino-acid polypeptide reads, in one-letter code: Phosphopantetheine adenylyltransferase (157 aa).

Serine 9 contributes to the substrate binding site. ATP-binding positions include 9 to 10 (SF) and histidine 17. Substrate-binding residues include lysine 41, leucine 74, and lysine 88. Residues 89–91 (GLR), glutamate 99, and 123–129 (YTHVSSS) contribute to the ATP site.

Belongs to the bacterial CoaD family. In terms of assembly, homohexamer. The cofactor is Mg(2+).

Its subcellular location is the cytoplasm. The catalysed reaction is (R)-4'-phosphopantetheine + ATP + H(+) = 3'-dephospho-CoA + diphosphate. It functions in the pathway cofactor biosynthesis; coenzyme A biosynthesis; CoA from (R)-pantothenate: step 4/5. Functionally, reversibly transfers an adenylyl group from ATP to 4'-phosphopantetheine, yielding dephospho-CoA (dPCoA) and pyrophosphate. This Micrococcus luteus (strain ATCC 4698 / DSM 20030 / JCM 1464 / CCM 169 / CCUG 5858 / IAM 1056 / NBRC 3333 / NCIMB 9278 / NCTC 2665 / VKM Ac-2230) (Micrococcus lysodeikticus) protein is Phosphopantetheine adenylyltransferase.